Reading from the N-terminus, the 244-residue chain is Type I iodothyronine deiodinase (244 aa).

At 1–12 the chain is on the extracellular side; the sequence is MGLSQLGLWLRR. A helical; Signal-anchor for type III membrane protein transmembrane segment spans residues 13-33; it reads LWVLFQVALQVAVGKVFLILF. Residues 34–244 lie on the Cytoplasmic side of the membrane; sequence PSRVKQHIVA…VRAVLEKLHS (211 aa). Selenocysteine 121 is a catalytic residue. Position 121 (selenocysteine 121) is a non-standard amino acid, selenocysteine.

It belongs to the iodothyronine deiodinase family. As to quaternary structure, predominantly monomer. Can form homodimers but homodimerization is not essential for enzyme activity.

The protein resides in the cell membrane. It localises to the endoplasmic reticulum membrane. It is found in the basolateral cell membrane. It catalyses the reaction 3,3',5-triiodo-L-thyronine + iodide + A + H(+) = L-thyroxine + AH2. The enzyme catalyses 3,3',5'-triiodo-L-thyronine + iodide + A + H(+) = L-thyroxine + AH2. It carries out the reaction 3,3'-diiodo-L-thyronine + iodide + A + H(+) = 3,3',5'-triiodo-L-thyronine + AH2. The catalysed reaction is 3,3'-diiodo-L-thyronine + iodide + A + H(+) = 3,3',5-triiodo-L-thyronine + AH2. It catalyses the reaction 3'-iodo-L-thyronine + iodide + A + H(+) = 3',5'-diiodo-L-thyronine + AH2. The enzyme catalyses 3-iodo-L-thyronine + iodide + A + H(+) = 3,5-diiodo-L-thyronine + AH2. It carries out the reaction 3-iodo-L-thyronine + iodide + A + H(+) = 3,3'-diiodo-L-thyronine + AH2. The catalysed reaction is 3,3'-diiodothyronamine + iodide + A + H(+) = 3,3',5'-triiodothyronamine + AH2. It catalyses the reaction 3'-iodothyronamine + iodide + A + H(+) = 3',5'-diiodothyronamine + AH2. The enzyme catalyses 3-iodothyronamine + iodide + A + H(+) = 3,3'-diiodothyronamine + AH2. It carries out the reaction 3,3'-diiodothyronamine + iodide + A + H(+) = 3,3',5-triiodothyronamine + AH2. The catalysed reaction is 3-iodothyronamine + iodide + A + H(+) = 3,5-diiodothyronamine + AH2. It catalyses the reaction 3,3'-diiodo-L-thyronine sulfate + iodide + A + H(+) = 3,3',5'-triiodo-L-thyronine sulfate + AH2. The enzyme catalyses 3,3',5'-triiodo-L-thyronine sulfate + iodide + A + H(+) = L-thyroxine sulfate + AH2. It carries out the reaction 3,3'-diiodo-L-thyronine sulfate + iodide + A + H(+) = 3,3',5-triiodo-L-thyronine sulfate + AH2. Functionally, plays a crucial role in the metabolism of thyroid hormones (TH) and has specific roles in TH activation and inactivation by deiodination. Catalyzes the deiodination of L-thyroxine (T4) to 3,5,3'-triiodothyronine (T3) and 3',5'-diiodothyronine (3',5'-T2) to 3'-monoiodothyronine (3'-T1) via outer-ring deiodination (ORD). Catalyzes the deiodination of T4 to 3,3',5'-triiodothyronine (rT3), T3 to 3,3'-diiodothyronine (3,3'-T2), 3,5-diiodothyronine (3,5-T2) to 3-monoiodothyronine (3-T1) and 3,3'-T2 to 3-T1 via inner-ring deiodination (IRD). Catalyzes the deiodination of rT3 to 3,3'-T2 via ORD. Catalyzes the phenolic ring deiodinations of 3,3',5'-triiodothyronamine, 3',5'-diiodothyronamine and 3,3'-diiodothyronamine as well as tyrosyl ring deiodinations of 3,5,3'-triiodothyronamine and 3,5-diiodothyronamine. Catalyzes the deiodination of L-thyroxine sulfate and 3,3',5-triiodo-L-thyronine sulfate via IRD and of 3,3',5'-triiodo-L-thyronine sulfate via ORD. The sequence is that of Type I iodothyronine deiodinase (DIO1) from Felis catus (Cat).